Here is a 798-residue protein sequence, read N- to C-terminus: MKAFSCLLAVIATAASLFQHVDASHARDKLNNISRVERPVIHTPSRRVHAHSHFDLTFDLYPRRNRIKLQLEPNHDVLSHNARVTFLDTEGNVDRIERIERRDHSVFKGWAWTQAKSGVWERVGWARIIMHRDGEDPLFEGVFTVMHDHHQVIAKSKYVRKRHQQDPPLDNTPGEYMLLFRGSDIAQTQSTGNVERSIMSSPSCDADTLAYDSNSNFMFPPLPEENNTSIWNYFMTSIGKRQMTDTGGVVPGSRDLKETIGSTSGCPNTRKVALIGVVADCTYTNTFASEMDARADIISVVNAASVVYEHSFNISLTLGEINILPKNCPATASSATPFNQQCDDRAGGGSFTLADRLNTFSAWRGKKTDDFAFWTLMTDCTTENQVGLAWAAQLCVKGVQGNPDSRNSSSQAVAGANVVSKTDNTWQVFAHEAGHIFGAVHDCDSMLCQNPANPDNSRCCPATASTCDARGRFMMNPTSGSQITNFSPCSIGQICSRMARRTILTNCLTTNRGVDTISGQQCGNGIVEDGEDCDCGDEESCKGNTCCDPKTCKYTSGSQCDDANEECCKGCKFASSSTICRTSSGPCDPEEKCSGNSGDCPHDIHSKDGGTCGTDLQCASGQCTSRDLQCQMHLGNQVAGSRTVAFDSYGCEVACKDPDRPNVRYEGSLTFLDGTPCGGGGTCKNGQCSGSTFGNEVSDWVSRHKPIVIGVAVGAGCLLLLAIASCICGRSRRQRPRNRKMPPINMRPMAPAYNGWNGAPPNAQQSSPGGHPPYNNIPPPINAPPPAYPGHMPPTRYA.

Positions 1-23 (MKAFSCLLAVIATAASLFQHVDA) are cleaved as a signal peptide. At 24–706 (SHARDKLNNI…VSDWVSRHKP (683 aa)) the chain is on the extracellular side. Residues N32, N226, N227, N313, and N407 are each glycosylated (N-linked (GlcNAc...) asparagine). The Peptidase M12B domain maps to 271-510 (KVALIGVVAD…RTILTNCLTT (240 aa)). 3 cysteine pairs are disulfide-bonded: C395/C495, C448/C459, and C580/C600. H431 serves as a coordination point for Zn(2+). E432 is a catalytic residue. The Zn(2+) site is built by H435 and H441. The Disintegrin domain maps to 519-608 (GQQCGNGIVE…DCPHDIHSKD (90 aa)). The helical transmembrane segment at 707-727 (IVIGVAVGAGCLLLLAIASCI) threads the bilayer. The Cytoplasmic portion of the chain corresponds to 728–798 (CGRSRRQRPR…PGHMPPTRYA (71 aa)). Residues 734–798 (QRPRNRKMPP…PGHMPPTRYA (65 aa)) form a disordered region. The span at 775-792 (NNIPPPINAPPPAYPGHM) shows a compositional bias: pro residues.

The cofactor is Zn(2+).

The protein localises to the membrane. Its function is as follows. Probable zinc protease. The protein is Disintegrin and metalloproteinase domain-containing protein B (ADM-B) of Trichophyton verrucosum (strain HKI 0517).